Here is an 802-residue protein sequence, read N- to C-terminus: Lon protease (802 aa).

Residues 17-209 (LPILPLNNVV…QVLSFLERER (193 aa)) form the Lon N-terminal domain. 363 to 370 (GPPGVGKT) is an ATP binding site. The Lon proteolytic domain occupies 599 to 780 (EDEVGVVTGL…DEVLPRVLHP (182 aa)). Residues serine 686 and lysine 729 contribute to the active site.

It belongs to the peptidase S16 family. In terms of assembly, homohexamer. Organized in a ring with a central cavity.

It is found in the cytoplasm. It catalyses the reaction Hydrolysis of proteins in presence of ATP.. In terms of biological role, ATP-dependent serine protease that mediates the selective degradation of mutant and abnormal proteins as well as certain short-lived regulatory proteins. Required for cellular homeostasis and for survival from DNA damage and developmental changes induced by stress. Degrades polypeptides processively to yield small peptide fragments that are 5 to 10 amino acids long. Binds to DNA in a double-stranded, site-specific manner. The polypeptide is Lon protease (Roseiflexus castenholzii (strain DSM 13941 / HLO8)).